A 569-amino-acid polypeptide reads, in one-letter code: Ribonuclease J (569 aa).

6 residues coordinate Zn(2+): His81, His83, Asp85, His86, His150, and Asp172. 373-377 is a binding site for substrate; that stretch reads HASGH. His399 contacts Zn(2+).

It belongs to the metallo-beta-lactamase superfamily. RNA-metabolizing metallo-beta-lactamase-like family. Bacterial RNase J subfamily. As to quaternary structure, homodimer, may be a subunit of the RNA degradosome. Zn(2+) serves as cofactor.

It is found in the cytoplasm. Its function is as follows. An RNase that has 5'-3' exonuclease and possibly endoonuclease activity. Involved in maturation of rRNA and in some organisms also mRNA maturation and/or decay. The sequence is that of Ribonuclease J from Mycoplasma pneumoniae (strain ATCC 29342 / M129 / Subtype 1) (Mycoplasmoides pneumoniae).